The chain runs to 375 residues: MSKRDYYEVLGVARGASDEELKKAYRRCAMKHHPDRNPGDAAAEAAFKECKEAYEVLSDGNKRRAYDAHGHAAFEHGMGGGGGPGGPDMGDIFGDIFGNIFGGGAAGPRAARRGADVGYVLELDLEEAVAGIERRIEIPTLVECAPCHGSGSEDGKVETCGTCHGRGQVRIQRGIFAMQQSCPHCDGRGTLIQNPCKTCHGAGRVEEDKVLSIKVPAGVDTGDRIRLAGEGEAGPAGTPPGDLYVEVRVREHAIFQRDGDDLHCEVPIRISQAALGDTVRVATLGGEAEIRIPAETQTGKLFRLRGKGVRSVRSRSEGDLYCRVVVETPVNLTADQRELLQQFEATFTGEDARKHSPKSATFIDGVKGFWDRMTS.

Residues 5–70 enclose the J domain; that stretch reads DYYEVLGVAR…NKRRAYDAHG (66 aa). The CR-type zinc-finger motif lies at 131-208; it reads GIERRIEIPT…CHGAGRVEED (78 aa). Positions 144, 147, 160, 163, 182, 185, 196, and 199 each coordinate Zn(2+). CXXCXGXG motif repeat units lie at residues 144-151, 160-167, 182-189, and 196-203; these read CAPCHGSG, CGTCHGRG, CPHCDGRG, and CKTCHGAG.

It belongs to the DnaJ family. Homodimer. The cofactor is Zn(2+).

The protein localises to the cytoplasm. Functionally, participates actively in the response to hyperosmotic and heat shock by preventing the aggregation of stress-denatured proteins and by disaggregating proteins, also in an autonomous, DnaK-independent fashion. Unfolded proteins bind initially to DnaJ; upon interaction with the DnaJ-bound protein, DnaK hydrolyzes its bound ATP, resulting in the formation of a stable complex. GrpE releases ADP from DnaK; ATP binding to DnaK triggers the release of the substrate protein, thus completing the reaction cycle. Several rounds of ATP-dependent interactions between DnaJ, DnaK and GrpE are required for fully efficient folding. Also involved, together with DnaK and GrpE, in the DNA replication of plasmids through activation of initiation proteins. This chain is Chaperone protein DnaJ, found in Xanthomonas euvesicatoria pv. vesicatoria (strain 85-10) (Xanthomonas campestris pv. vesicatoria).